We begin with the raw amino-acid sequence, 398 residues long: 1-aminocyclopropane-1-carboxylate oxidase homolog 5 (398 aa).

The Fe2OG dioxygenase domain occupies 247–347 (KSHIMFGQYY…RISMPCFVST (101 aa)). Positions 271, 273, and 327 each coordinate Fe cation. 2-oxoglutarate is bound at residue Arg-338.

It belongs to the iron/ascorbate-dependent oxidoreductase family. It depends on Fe(2+) as a cofactor. As to expression, expressed in etiolated seedlings, leaves, stems and flowers.

This chain is 1-aminocyclopropane-1-carboxylate oxidase homolog 5 (2A6), found in Arabidopsis thaliana (Mouse-ear cress).